A 161-amino-acid chain; its full sequence is Ribosome maturation factor RimP (161 aa).

The protein belongs to the RimP family.

It localises to the cytoplasm. In terms of biological role, required for maturation of 30S ribosomal subunits. This Pelobacter propionicus (strain DSM 2379 / NBRC 103807 / OttBd1) protein is Ribosome maturation factor RimP.